Reading from the N-terminus, the 323-residue chain is Aspartate carbamoyltransferase catalytic subunit (323 aa).

Carbamoyl phosphate-binding residues include Arg55 and Thr56. Lys83 provides a ligand contact to L-aspartate. 3 residues coordinate carbamoyl phosphate: Arg105, His133, and Gln136. L-aspartate-binding residues include Arg166 and Arg220. 2 residues coordinate carbamoyl phosphate: Gly261 and Pro262.

This sequence belongs to the aspartate/ornithine carbamoyltransferase superfamily. ATCase family. In terms of assembly, heterododecamer (2C3:3R2) of six catalytic PyrB chains organized as two trimers (C3), and six regulatory PyrI chains organized as three dimers (R2).

It carries out the reaction carbamoyl phosphate + L-aspartate = N-carbamoyl-L-aspartate + phosphate + H(+). Its pathway is pyrimidine metabolism; UMP biosynthesis via de novo pathway; (S)-dihydroorotate from bicarbonate: step 2/3. Catalyzes the condensation of carbamoyl phosphate and aspartate to form carbamoyl aspartate and inorganic phosphate, the committed step in the de novo pyrimidine nucleotide biosynthesis pathway. The protein is Aspartate carbamoyltransferase catalytic subunit of Acidothermus cellulolyticus (strain ATCC 43068 / DSM 8971 / 11B).